The primary structure comprises 688 residues: Glycine--tRNA ligase beta subunit (688 aa).

Belongs to the class-II aminoacyl-tRNA synthetase family. Tetramer of two alpha and two beta subunits.

Its subcellular location is the cytoplasm. It carries out the reaction tRNA(Gly) + glycine + ATP = glycyl-tRNA(Gly) + AMP + diphosphate. The sequence is that of Glycine--tRNA ligase beta subunit from Listeria monocytogenes serotype 4b (strain CLIP80459).